A 325-amino-acid chain; its full sequence is Protease HtpX homolog (325 aa).

A helical transmembrane segment spans residues 20 to 40 (IGYLLGGGGGMMIALVIAVAM). Zn(2+) is bound at residue His130. Residue Glu131 is part of the active site. His134 provides a ligand contact to Zn(2+). A run of 2 helical transmembrane segments spans residues 145 to 165 (IVAT…FLGG) and 173 to 193 (VMGV…AMIV). Glu202 lines the Zn(2+) pocket. A disordered region spans residues 288–325 (AMTARAAAPSQNSGPWGQRSDNAGGNSNGGSRYRGPWS). Low complexity predominate over residues 306–325 (RSDNAGGNSNGGSRYRGPWS).

The protein belongs to the peptidase M48B family. Zn(2+) is required as a cofactor.

It is found in the cell inner membrane. This is Protease HtpX homolog from Brucella suis (strain ATCC 23445 / NCTC 10510).